The chain runs to 524 residues: 3-epi-6-deoxocathasterone 23-monooxygenase CYP90C1 (524 aa).

The chain crosses the membrane as a helical span at residues 25–45; the sequence is YLVAGFLVLTAGILLRPWLWL. A heme-binding site is contributed by Cys-463.

The protein belongs to the cytochrome P450 family. Heme is required as a cofactor. As to expression, widely expressed.

It is found in the endoplasmic reticulum membrane. The catalysed reaction is 3-epi-6-deoxocathasterone + reduced [NADPH--hemoprotein reductase] + O2 = 6-deoxotyphasterol + oxidized [NADPH--hemoprotein reductase] + H2O + H(+). It carries out the reaction (22S,24R)-22-hydroxy-5alpha-ergostan-3-one + reduced [NADPH--hemoprotein reductase] + O2 = 3-dehydro-6-deoxoteasterone + oxidized [NADPH--hemoprotein reductase] + H2O + H(+). The protein operates within plant hormone biosynthesis; brassinosteroid biosynthesis. Functionally, involved in brassinosteroid (BR) biosynthesis. Converts typhasterol (TY) to cathasterone (CS) and 6-deoxotyphasterol (6-deoxoTY) to 6-deoxocathasterone (6-deoxoCT). C-23 hydroxylase that converts directly (22S,24R)-22-hydroxy-5-alpha-ergostan-3-one and 3-epi-6-deoxocathasterone to 3-dehydro-6-deoxoteasterone (6-deoxo3DT, 6-deoxo3DHT) and 6-deoxotyphasterol (6-deoxoTY), respectively. These C-23 hydroxylation shortcuts bypass campestanol, 6-deoxocathasterone, and 6-deoxoteasterone (6-deoxoTE). Also catalyzes the conversion of cathasterone to teasterone (TE), (22S,24R)-22-hydroxyergost-4-en-3-one (22-OH-4-en-3-one) to (22R,23R)-22,23-dihydroxy-campest-4-en-3-one (22,23-diOH-4-en-3-one) and (22S)-22-hydroxycampesterol (22-OHCR) to (22R,23R)-22,23-dihydroxycampesterol (22,23-diOHCR). Required for the regulation of polar elongation of leaf cells. Required for the longitudinal elongation of floral organs. This Arabidopsis thaliana (Mouse-ear cress) protein is 3-epi-6-deoxocathasterone 23-monooxygenase CYP90C1.